A 268-amino-acid polypeptide reads, in one-letter code: MICOS complex subunit MIC27 (268 aa).

Residues 1–27 constitute a mitochondrion transit peptide; that stretch reads MAAIRMGKLTTMPAGLIYASVSVHAAK. Residues 28–110 are Mitochondrial intermembrane-facing; that stretch reads QEESKKQLVK…YVYLKNPPRD (83 aa). The chain crosses the membrane as a helical span at residues 111–129; it reads FLPKMGVITVSGLAGLVSA. At 130 to 137 the chain is on the mitochondrial matrix side; the sequence is RKGSKFKK. The helical transmembrane segment at 138 to 155 threads the bilayer; the sequence is ITYPLGLATLGATVCYPV. The Mitochondrial intermembrane segment spans residues 156 to 268; the sequence is QSVIIAKVTA…EDIDMYSTRS (113 aa). The span at 187–200 shows a compositional bias: basic and acidic residues; it reads SKEESLPKPKEKTK. The interval 187–268 is disordered; that stretch reads SKEESLPKPK…EDIDMYSTRS (82 aa). Position 204 is a phosphoserine (serine 204). The span at 249–260 shows a compositional bias: basic and acidic residues; it reads KLMDHGQSHPED.

The protein belongs to the apolipoprotein O/MICOS complex subunit Mic27 family. In terms of assembly, component of the mitochondrial contact site and cristae organizing system (MICOS) complex, composed of at least MICOS10/MIC10, CHCHD3/MIC19, CHCHD6/MIC25, APOOL/MIC27, IMMT/MIC60, APOO/MIC23/MIC26 and MICOS13/MIC13. This complex was also known under the names MINOS or MitOS complex. The MICOS complex associates with mitochondrial outer membrane proteins SAMM50, MTX1 and MTX2 (together described as components of the mitochondrial outer membrane sorting assembly machinery (SAM) complex) and DNAJC11, mitochondrial inner membrane protein TMEM11 and with HSPA9. The MICOS and SAM complexes together with DNAJC11 are part of a large protein complex spanning both membranes termed the mitochondrial intermembrane space bridging (MIB) complex. Interacts with MICOS10/MIC10, IMMT/MIC60 and APOO/MIC23/MIC26.

Its subcellular location is the mitochondrion inner membrane. It is found in the mitochondrion. Component of the MICOS complex, a large protein complex of the mitochondrial inner membrane that plays crucial roles in the maintenance of crista junctions, inner membrane architecture, and formation of contact sites to the outer membrane. Specifically binds to cardiolipin (in vitro) but not to the precursor lipid phosphatidylglycerol. Plays a crucial role in crista junction formation and mitochondrial function,. This chain is MICOS complex subunit MIC27 (APOOL), found in Homo sapiens (Human).